We begin with the raw amino-acid sequence, 347 residues long: GMP reductase (347 aa).

An NADP(+)-binding site is contributed by 108 to 131; the sequence is DDFTKTRQILAMSSALRFICVDVA. Residues glycine 181 and glycine 183 each coordinate K(+). The active-site Thioimidate intermediate is the cysteine 186. 216-239 provides a ligand contact to NADP(+); that stretch reads IVGDGGCTCPGDVAKAFGGGADFV.

This sequence belongs to the IMPDH/GMPR family. GuaC type 1 subfamily. As to quaternary structure, homotetramer.

The enzyme catalyses IMP + NH4(+) + NADP(+) = GMP + NADPH + 2 H(+). Its function is as follows. Catalyzes the irreversible NADPH-dependent deamination of GMP to IMP. It functions in the conversion of nucleobase, nucleoside and nucleotide derivatives of G to A nucleotides, and in maintaining the intracellular balance of A and G nucleotides. In Aeromonas hydrophila subsp. hydrophila (strain ATCC 7966 / DSM 30187 / BCRC 13018 / CCUG 14551 / JCM 1027 / KCTC 2358 / NCIMB 9240 / NCTC 8049), this protein is GMP reductase.